A 332-amino-acid polypeptide reads, in one-letter code: MASKDIVHPQPERRHGSETHEFTMPLLSPTLTPSHIPSQTPQIPPEVPAEVRDRLPLPETLPVVKCMARARIPTTQGPEIFLHLYENNVDNKEHLAIVFGEDVRSKTLYQKRPNETQQDRMTRGAYVGRLFPGRTEADYDSESNLRLNFDENGQLIRDPSTTCSGEPILARIHSECYTGETAWSARCDCGEQFDEAGRLMGEAGHGCIVYLRQEGRGIGLGEKLKAYNLQDLGADTVQANLMLRHPADARSFSLATAILLDLGLNEIKLLTNNPDKIAAVEGRNREVKVVERVPMVPLAWRSENGIKSKEIEGYLSAKIERMGHLLEKPLKI.

Disordered regions lie at residues 1–20 (MASKDIVHPQPERRHGSETH) and 25–46 (PLLSPTLTPSHIPSQTPQIPPE). Residues 29–41 (PTLTPSHIPSQTP) are compositionally biased toward polar residues. 171 to 175 (RIHSE) is a binding site for GTP. Cys-176, Cys-187, and Cys-189 together coordinate Zn(2+). Residues Gln-192, 214–216 (EGR), and Thr-236 each bind GTP. Asp-248 (proton acceptor) is an active-site residue. The active-site Nucleophile is Arg-250. Positions 271 and 276 each coordinate GTP.

This sequence belongs to the GTP cyclohydrolase II family. It depends on Zn(2+) as a cofactor.

It catalyses the reaction GTP + 4 H2O = 2,5-diamino-6-hydroxy-4-(5-phosphoribosylamino)-pyrimidine + formate + 2 phosphate + 3 H(+). It participates in cofactor biosynthesis; riboflavin biosynthesis; 5-amino-6-(D-ribitylamino)uracil from GTP: step 1/4. Its function is as follows. Catalyzes the conversion of GTP to 2,5-diamino-6-ribosylamino-4(3H)-pyrimidinone 5'-phosphate (DARP), formate and pyrophosphate. The protein is GTP cyclohydrolase-2 (RIB1) of Meyerozyma guilliermondii (strain ATCC 6260 / CBS 566 / DSM 6381 / JCM 1539 / NBRC 10279 / NRRL Y-324) (Yeast).